A 774-amino-acid polypeptide reads, in one-letter code: Transcription factor MBS1 (774 aa).

An HTH APSES-type domain is found at 37–143 (EITFYDSGVP…YVPTSVSPPP (107 aa)). The H-T-H motif DNA-binding region spans 68-89 (ATQILKVAGFDKPQRTRVLERE). 2 disordered regions span residues 135 to 180 (VPTS…SAAA) and 209 to 229 (RVSL…VASV). The segment covering 155-165 (ARRDKEKETGR) has biased composition (basic and acidic residues). Polar residues predominate over residues 166-176 (TKATPSRTGPT). ANK repeat units follow at residues 348-377 (DGHT…SIFA) and 467-496 (EGET…NPKI). The interval 752 to 774 (EEENDNQVYNTSAGESGPSSWVQ) is disordered. Residues 757–774 (NQVYNTSAGESGPSSWVQ) are compositionally biased toward polar residues.

It localises to the nucleus. Functionally, transcription factor that positively regulates ergosterol biosynthesis and thereby affects polyene and azole drug susceptibility. Plays a role in maintenance of membrane stability and osmotic stress response. Involved in genotoxic and oxidative stress responses. Also promotes production of melanin and capsule and thereby is required for full virulence. The chain is Transcription factor MBS1 from Cryptococcus neoformans var. grubii serotype A (strain H99 / ATCC 208821 / CBS 10515 / FGSC 9487) (Filobasidiella neoformans var. grubii).